We begin with the raw amino-acid sequence, 218 residues long: MAEAILAVRGGLGAKSRLAAVFSDAERAALVEAMLLDMLDALAGAGAGAVRRVWVVTPTERLERLAAAAGARVIREPRPAGLNAAFRCGLAAAAEEAPYADIVLLPGDLPTLRAQDVDAALLLLRTHDLVLALASRDGGTGLLAVRAGVPFTPQFGAQSCARHRRQARARGLSCALVEAGSLALDLDRPEDAVEVARGPCGRRTAEVLSDLKSRWRAQ.

This sequence belongs to the CofC family.

The catalysed reaction is (2R)-3-phosphoglycerate + GTP + H(+) = 3-[(R)-glyceryl]-diphospho-5'-guanosine + diphosphate. It participates in cofactor biosynthesis; coenzyme F420 biosynthesis. Its function is as follows. Guanylyltransferase that catalyzes the activation of (2R)-3-phosphoglycerate (3PG) as 3-[(R)-glyceryl]-diphospho-5'-guanosine, via the condensation of 3PG with GTP. It is involved in the biosynthesis of a derivative of the hydride carrier cofactor coenzyme F420, 3PG-F420. This chain is 3-phospho-D-glycerate guanylyltransferase, found in Phenylobacterium zucineum (strain HLK1).